The chain runs to 203 residues: Cilia- and flagella-associated protein 20 (203 aa).

It belongs to the CFAP20 family.

The protein localises to the nucleus. It localises to the cytoplasm. The protein resides in the cytoskeleton. It is found in the microtubule organizing center. Its subcellular location is the centrosome. The protein localises to the centriole. It localises to the cilium basal body. The protein resides in the cilium axoneme. Its function is as follows. Cilium- and flagellum-specific protein that plays a role in axonemal structure organization and motility. Microtubule inner protein (MIP) part of the dynein-decorated doublet microtubules (DMTs) in cilia axoneme, which is required for motile cilia beating. Involved in the regulation of the size and morphology of cilia. Required for axonemal microtubules polyglutamylation. This chain is Cilia- and flagella-associated protein 20, found in Caenorhabditis elegans.